The primary structure comprises 360 residues: Photosystem II protein D1 (360 aa).

3 helical membrane passes run 29-46, 118-133, and 142-156; these read YIGW…TAAS, HFLI…EWEL, and WIFV…AASA. His-118 contacts chlorophyll a. Trp-126 is a binding site for pheophytin a. [CaMn4O5] cluster contacts are provided by Asp-170 and Glu-189. The helical transmembrane segment at 197–218 threads the bilayer; that stretch reads FHMAGVAGVFGGSLFSAMHGSL. Position 198 (His-198) interacts with chlorophyll a. Residues His-215 and 264-265 each bind a quinone; that span reads SF. His-215 provides a ligand contact to Fe cation. His-272 serves as a coordination point for Fe cation. A helical transmembrane segment spans residues 274–288; that stretch reads FLAAWPVVGIWLTAL. 4 residues coordinate [CaMn4O5] cluster: His-332, Glu-333, Asp-342, and Ala-344. Residues 345-360 constitute a propeptide that is removed on maturation; the sequence is SNEILPVAISAPSVVG.

This sequence belongs to the reaction center PufL/M/PsbA/D family. PSII is composed of 1 copy each of membrane proteins PsbA, PsbB, PsbC, PsbD, PsbE, PsbF, PsbH, PsbI, PsbJ, PsbK, PsbL, PsbM, PsbT, PsbX, PsbY, PsbZ, Psb30/Ycf12, at least 3 peripheral proteins of the oxygen-evolving complex and a large number of cofactors. It forms dimeric complexes. It depends on The D1/D2 heterodimer binds P680, chlorophylls that are the primary electron donor of PSII, and subsequent electron acceptors. It shares a non-heme iron and each subunit binds pheophytin, quinone, additional chlorophylls, carotenoids and lipids. D1 provides most of the ligands for the Mn4-Ca-O5 cluster of the oxygen-evolving complex (OEC). There is also a Cl(-1) ion associated with D1 and D2, which is required for oxygen evolution. The PSII complex binds additional chlorophylls, carotenoids and specific lipids. as a cofactor. Post-translationally, tyr-161 forms a radical intermediate that is referred to as redox-active TyrZ, YZ or Y-Z. In terms of processing, C-terminally processed by CTPA; processing is essential to allow assembly of the oxygen-evolving complex and thus photosynthetic growth.

Its subcellular location is the plastid. The protein localises to the chloroplast thylakoid membrane. The catalysed reaction is 2 a plastoquinone + 4 hnu + 2 H2O = 2 a plastoquinol + O2. Functionally, photosystem II (PSII) is a light-driven water:plastoquinone oxidoreductase that uses light energy to abstract electrons from H(2)O, generating O(2) and a proton gradient subsequently used for ATP formation. It consists of a core antenna complex that captures photons, and an electron transfer chain that converts photonic excitation into a charge separation. The D1/D2 (PsbA/PsbD) reaction center heterodimer binds P680, the primary electron donor of PSII as well as several subsequent electron acceptors. This Ectocarpus siliculosus (Brown alga) protein is Photosystem II protein D1.